A 213-amino-acid polypeptide reads, in one-letter code: Outer-membrane lipoprotein carrier protein (213 aa).

The N-terminal stretch at 1–23 (MKKLLKQSLLGFALVSMTGAAFA) is a signal peptide.

Belongs to the LolA family. Monomer.

Its subcellular location is the periplasm. Participates in the translocation of lipoproteins from the inner membrane to the outer membrane. Only forms a complex with a lipoprotein if the residue after the N-terminal Cys is not an aspartate (The Asp acts as a targeting signal to indicate that the lipoprotein should stay in the inner membrane). This is Outer-membrane lipoprotein carrier protein from Actinobacillus pleuropneumoniae serotype 3 (strain JL03).